A 207-amino-acid chain; its full sequence is ATP phosphoribosyltransferase (207 aa).

It belongs to the ATP phosphoribosyltransferase family. Short subfamily. As to quaternary structure, heteromultimer composed of HisG and HisZ subunits.

The protein resides in the cytoplasm. It carries out the reaction 1-(5-phospho-beta-D-ribosyl)-ATP + diphosphate = 5-phospho-alpha-D-ribose 1-diphosphate + ATP. It participates in amino-acid biosynthesis; L-histidine biosynthesis; L-histidine from 5-phospho-alpha-D-ribose 1-diphosphate: step 1/9. Catalyzes the condensation of ATP and 5-phosphoribose 1-diphosphate to form N'-(5'-phosphoribosyl)-ATP (PR-ATP). Has a crucial role in the pathway because the rate of histidine biosynthesis seems to be controlled primarily by regulation of HisG enzymatic activity. The protein is ATP phosphoribosyltransferase of Dictyoglomus thermophilum (strain ATCC 35947 / DSM 3960 / H-6-12).